Consider the following 215-residue polypeptide: Keratin-associated protein 26-1 (215 aa).

This sequence belongs to the PMG family. As to quaternary structure, interacts with hair keratins.

In the hair cortex, hair keratin intermediate filaments are embedded in an interfilamentous matrix, consisting of hair keratin-associated proteins (KRTAP), which are essential for the formation of a rigid and resistant hair shaft through their extensive disulfide bond cross-linking with abundant cysteine residues of hair keratins. The matrix proteins include the high-sulfur and high-glycine-tyrosine keratins. The chain is Keratin-associated protein 26-1 from Mus musculus (Mouse).